Reading from the N-terminus, the 213-residue chain is Orotate phosphoribosyltransferase (213 aa).

Lys25 serves as a coordination point for 5-phospho-alpha-D-ribose 1-diphosphate. Orotate is bound at residue 33 to 34; sequence FF. Residues 71–72, Arg98, Lys99, Lys102, His104, and 124–132 each bind 5-phospho-alpha-D-ribose 1-diphosphate; these read YK and DDVITSGTA. 2 residues coordinate orotate: Thr128 and Arg156.

It belongs to the purine/pyrimidine phosphoribosyltransferase family. PyrE subfamily. As to quaternary structure, homodimer. Mg(2+) is required as a cofactor.

The enzyme catalyses orotidine 5'-phosphate + diphosphate = orotate + 5-phospho-alpha-D-ribose 1-diphosphate. It functions in the pathway pyrimidine metabolism; UMP biosynthesis via de novo pathway; UMP from orotate: step 1/2. Functionally, catalyzes the transfer of a ribosyl phosphate group from 5-phosphoribose 1-diphosphate to orotate, leading to the formation of orotidine monophosphate (OMP). In Buchnera aphidicola subsp. Acyrthosiphon pisum (strain 5A), this protein is Orotate phosphoribosyltransferase.